Consider the following 770-residue polypeptide: Probable methyltransferase PMT25 (770 aa).

The Cytoplasmic portion of the chain corresponds to 1 to 17; it reads MAMGKYSRVDGKKSSSY. A helical; Signal-anchor for type II membrane protein membrane pass occupies residues 18–38; the sequence is GLTITIVLLLSLCLVGTWMFM. Over 39–770 the chain is Lumenal; the sequence is SSWSAPADSA…ETETIKSAIA (732 aa). The disordered stretch occupies residues 44-238; sequence PADSAGYSST…SSISKDQSSY (195 aa). The span at 55-79 shows a compositional bias: basic and acidic residues; the sequence is TAKDVSKNDLRKEEGDRDPKNFSDE. N75 and N107 each carry an N-linked (GlcNAc...) asparagine glycan. A compositionally biased stretch (polar residues) spans 92–109; that stretch reads QVKTDSENSAEGNQVNES. Basic and acidic residues-rich tracts occupy residues 110-124 and 131-177; these read SGEKTEAGEERKESD and DGEK…KAEE. N-linked (GlcNAc...) asparagine glycosylation is found at N163 and N178. Polar residues-rich tracts occupy residues 205-220 and 227-238; these read ESSTGDGAWSTQLVES and QQSSISKDQSSY. N-linked (GlcNAc...) asparagine glycans are attached at residues N244 and N363.

This sequence belongs to the methyltransferase superfamily.

The protein resides in the golgi apparatus membrane. The protein is Probable methyltransferase PMT25 of Arabidopsis thaliana (Mouse-ear cress).